Consider the following 382-residue polypeptide: F-box protein At3g27290 (382 aa).

The F-box domain occupies 16–105 (RKLELGLGEF…VDQMLFETLS (90 aa)).

The protein is F-box protein At3g27290 of Arabidopsis thaliana (Mouse-ear cress).